The primary structure comprises 952 residues: Valine--tRNA ligase (952 aa).

Positions 45–55 (PNVTGSLHMGH) match the 'HIGH' region motif. The short motif at 571–575 (KMSKS) is the 'KMSKS' region element. Residue Lys-574 coordinates ATP. The stretch at 894–950 (KEIAKADADIARVDLKLADQNFIANAPGEIVEDEKEKREAAAARKAKFVEALERLKA) forms a coiled coil.

This sequence belongs to the class-I aminoacyl-tRNA synthetase family. ValS type 1 subfamily. In terms of assembly, monomer.

Its subcellular location is the cytoplasm. The enzyme catalyses tRNA(Val) + L-valine + ATP = L-valyl-tRNA(Val) + AMP + diphosphate. In terms of biological role, catalyzes the attachment of valine to tRNA(Val). As ValRS can inadvertently accommodate and process structurally similar amino acids such as threonine, to avoid such errors, it has a 'posttransfer' editing activity that hydrolyzes mischarged Thr-tRNA(Val) in a tRNA-dependent manner. This chain is Valine--tRNA ligase, found in Nitrobacter winogradskyi (strain ATCC 25391 / DSM 10237 / CIP 104748 / NCIMB 11846 / Nb-255).